Reading from the N-terminus, the 639-residue chain is Splicing factor 1 (639 aa).

2 disordered regions span residues 1–42 (MATG…VIPP) and 65–94 (LRTGDLGIPPNPEDRSPSPEPIYNSEGKRL). Position 2 is an N-acetylalanine (alanine 2). Serine 14 is modified (phosphoserine). The Nuclear localization signal signature appears at 15 to 19 (KKRKR). Serine 20 bears the Phosphoserine; by PKG mark. A phosphoserine mark is found at serine 80 and serine 82. Tyrosine 87 is subject to Phosphotyrosine. The residue at position 89 (serine 89) is a Phosphoserine. A KH domain is found at 141–222 (MIPQDEYPEI…ENVKKAVEQI (82 aa)). Residues 277 to 296 (TVCTKCGGAGHIASDCKFQR) form a CCHC-type zinc finger. A disordered region spans residues 325 to 639 (VPASVGSTSG…PAPPPPPPQN (315 aa)). The span at 335-350 (PATTPLASAPRPAAPA) shows a compositional bias: low complexity. Gly residues predominate over residues 382–394 (MHGGGPGGPGGGP). Over residues 418-447 (NGPPPPWMQPPPPPMNQGPHPPGHHGPPPM) the composition is skewed to pro residues. Leucine 463 is modified (phosphoserine). Lysine 467 is modified (omega-N-methylarginine). Residues 470–499 (MPPPPMGMMPPPPPPPSGQPPPPPSGPLPP) show a composition bias toward pro residues. Composition is skewed to low complexity over residues 515–534 (SSMASSTPLPWQQNTTTTTT) and 542–566 (PPWQQQQAAAAASPGAPQMQGNPTM). 2 stretches are compositionally biased toward pro residues: residues 567-591 (VPLPPGVQPPLPPGAPPPPPPPPPG) and 598-608 (APPPPPPPPMD). The segment covering 615–625 (MMGMGVAGMPP) has biased composition (low complexity). Positions 626-639 (FGMPPAPPPPPPQN) are enriched in pro residues.

The protein belongs to the BBP/SF1 family. As to quaternary structure, binds U2AF2. Interacts with U1 snRNA. Binds EWSR1, FUS and TAF15. Interacts with RBM17. Post-translationally, phosphorylation on Ser-20 interferes with U2AF2 binding and spliceosome assembly. Isoform 6 is phosphorylated on Ser-463. As to expression, detected in lung, ovary, adrenal gland, colon, kidney, muscle, pancreas, thyroid, placenta, brain, liver and heart.

The protein resides in the nucleus. Necessary for the ATP-dependent first step of spliceosome assembly. Binds to the intron branch point sequence (BPS) 5'-UACUAAC-3' of the pre-mRNA. May act as transcription repressor. This Homo sapiens (Human) protein is Splicing factor 1 (SF1).